Here is a 213-residue protein sequence, read N- to C-terminus: Cell wall protein PGA62 (213 aa).

The first 18 residues, 1 to 18, serve as a signal peptide directing secretion; it reads MQFSSAVVLSAVAGSALA. Asn-22 carries an N-linked (GlcNAc...) asparagine glycan. The disordered stretch occupies residues 120-194; the sequence is CPLPSTEAPG…APAVSTAEAG (75 aa). The span at 145–172 shows a compositional bias: polar residues; the sequence is PVPTTAAESSPAKTTAAESSPAQETTPK. A compositionally biased stretch (low complexity) spans 173–194; sequence TVAAESSSAETTAPAVSTAEAG. The GPI-anchor amidated glycine moiety is linked to residue Gly-194. Residues 195–213 constitute a propeptide, removed in mature form; the sequence is AAANAVPVAAGLLALAALF.

It belongs to the HWP1 family. Post-translationally, N- and O-glycosylated. In terms of processing, the GPI-anchor is attached to the protein in the endoplasmic reticulum and serves to target the protein to the cell surface. There, the glucosamine-inositol phospholipid moiety is cleaved off and the GPI-modified mannoprotein is covalently attached via its lipidless GPI glycan remnant to the 1,6-beta-glucan of the outer cell wall layer.

The protein localises to the secreted. It is found in the cell wall. It localises to the membrane. Functionally, cell wall protein necessary for cell wall integrity. Plays only a minor role in hyphal morphogenesis and is not critical to biofilm formation. This chain is Cell wall protein PGA62 (PGA62), found in Candida albicans (strain SC5314 / ATCC MYA-2876) (Yeast).